Consider the following 399-residue polypeptide: MNILVINTGSSSLKYQLIDMTNESVLAKGVCDRIGLEHSFLKHTKTGGETVVIEKDLYNHKLAIQEVISALTDEKIGVIKSMSEISAVGHRIVHGGEKFKESAIIDEDVMKAIRDCVELAPLHNPSNIIGIEACKQILPDVPMVAVFDTAFHQTMPRHAYIYALPYEIYEKYKLRKYGFHGTSHKYVAHRAAQMLGKPIESLKLITCHLGNGASICAVKGGKSVDTSMGFTPLQGLCMGTRSGNVDPAVITYLMEKEKMNINDINNFLNKKSGVLGISGVSSDFRDVQDAAEKGDDRAQLALDIFCYGVRKYIGKYIAVLNGVDAVVFTAGIGENNAYIRREVLKDMDFFGIKIDLDKNEVKGKEADISAPDAKVKTLVIPTNEELEIARETLRLVKNL.

Residue Asn7 participates in Mg(2+) binding. Lys14 lines the ATP pocket. Residue Arg91 participates in substrate binding. Asp148 acts as the Proton donor/acceptor in catalysis. ATP-binding positions include 208–212 (HLGNG), 283–285 (DFR), and 331–335 (GIGEN). Glu384 is a Mg(2+) binding site.

Belongs to the acetokinase family. In terms of assembly, homodimer. Mg(2+) serves as cofactor. The cofactor is Mn(2+).

It localises to the cytoplasm. It carries out the reaction acetate + ATP = acetyl phosphate + ADP. It functions in the pathway metabolic intermediate biosynthesis; acetyl-CoA biosynthesis; acetyl-CoA from acetate: step 1/2. Its function is as follows. Catalyzes the formation of acetyl phosphate from acetate and ATP. Can also catalyze the reverse reaction. This chain is Acetate kinase, found in Acetivibrio thermocellus (strain ATCC 27405 / DSM 1237 / JCM 9322 / NBRC 103400 / NCIMB 10682 / NRRL B-4536 / VPI 7372) (Clostridium thermocellum).